The sequence spans 616 residues: Protein NRT1/ PTR FAMILY 2.11 (616 aa).

The interval 1–22 is disordered; it reads MERKPLELESTDNHQNPSSAVY. Helical transmembrane passes span 59–79, 87–107, 118–138, 159–179, 205–225, 233–253, 349–369, 392–412, 435–455, 483–503, 519–539, and 566–586; these read FEKL…TAVF, ATII…AAFL, LSVA…TAAV, GGQI…AGGI, FFNW…TLVV, WTIG…IFFA, VKCI…YLTI, FVIP…VFIV, LQRI…AGFV, AMWL…AAIG, FAGS…SFLI, and LFYF…LVMS.

This sequence belongs to the major facilitator superfamily. Proton-dependent oligopeptide transporter (POT/PTR) (TC 2.A.17) family. In terms of tissue distribution, expressed in roots. Detected in shoots, stems and flowers. Expressed in veins and in the root vasculature with highest expression in lateral branching points.

The protein localises to the cell membrane. Functionally, high-affinity, proton-dependent glucosinolate-specific transporter. Involved in apoplasmic phloem-loading of glucosinolates and in bidirectional long-distance transport of aliphatic but not indole glucosinolates. May be involved in removal of glucosinolates from the xylem in roots. In Arabidopsis thaliana (Mouse-ear cress), this protein is Protein NRT1/ PTR FAMILY 2.11 (NPF2.11).